A 263-amino-acid polypeptide reads, in one-letter code: Indole-3-glycerol phosphate synthase (263 aa).

This sequence belongs to the TrpC family.

It carries out the reaction 1-(2-carboxyphenylamino)-1-deoxy-D-ribulose 5-phosphate + H(+) = (1S,2R)-1-C-(indol-3-yl)glycerol 3-phosphate + CO2 + H2O. It participates in amino-acid biosynthesis; L-tryptophan biosynthesis; L-tryptophan from chorismate: step 4/5. This Acidithiobacillus ferrooxidans (strain ATCC 23270 / DSM 14882 / CIP 104768 / NCIMB 8455) (Ferrobacillus ferrooxidans (strain ATCC 23270)) protein is Indole-3-glycerol phosphate synthase.